Reading from the N-terminus, the 195-residue chain is PABIR family member 1 (195 aa).

Belongs to the FAM122 family.

This is PABIR family member 1 from Homo sapiens (Human).